The chain runs to 22 residues: 50 kDa cell wall protein (22 aa).

The protein localises to the secreted. Its subcellular location is the cell wall. This Nicotiana tabacum (Common tobacco) protein is 50 kDa cell wall protein.